Consider the following 127-residue polypeptide: UPF0102 protein ERGA_CDS_00540 (127 aa).

The protein belongs to the UPF0102 family.

This is UPF0102 protein ERGA_CDS_00540 from Ehrlichia ruminantium (strain Gardel).